Here is a 461-residue protein sequence, read N- to C-terminus: Cysteine--tRNA ligase (461 aa).

Cys-28 is a binding site for Zn(2+). The 'HIGH' region signature appears at 30 to 40; sequence ITVYDLCHIGH. Zn(2+) is bound by residues Cys-209, His-234, and Glu-238. Residues 266–270 carry the 'KMSKS' region motif; sequence KMSKS. Lys-269 contacts ATP.

This sequence belongs to the class-I aminoacyl-tRNA synthetase family. Monomer. Zn(2+) is required as a cofactor.

The protein localises to the cytoplasm. The enzyme catalyses tRNA(Cys) + L-cysteine + ATP = L-cysteinyl-tRNA(Cys) + AMP + diphosphate. In Escherichia coli O17:K52:H18 (strain UMN026 / ExPEC), this protein is Cysteine--tRNA ligase.